We begin with the raw amino-acid sequence, 186 residues long: NADH-quinone oxidoreductase subunit I (186 aa).

2 consecutive 4Fe-4S ferredoxin-type domains span residues 70–100 and 113–142; these read LTTRADGKVQCVSCNMCATVCPAYCIEIQSA and DRFEIDYSRCIFCGFCVEACPEDAIRMSKD. The [4Fe-4S] cluster site is built by cysteine 80, cysteine 83, cysteine 86, cysteine 90, cysteine 122, cysteine 125, cysteine 128, and cysteine 132.

This sequence belongs to the complex I 23 kDa subunit family. As to quaternary structure, NDH-1 is composed of 14 different subunits. Subunits NuoA, H, J, K, L, M, N constitute the membrane sector of the complex. The cofactor is [4Fe-4S] cluster.

It localises to the cell inner membrane. It carries out the reaction a quinone + NADH + 5 H(+)(in) = a quinol + NAD(+) + 4 H(+)(out). In terms of biological role, NDH-1 shuttles electrons from NADH, via FMN and iron-sulfur (Fe-S) centers, to quinones in the respiratory chain. The immediate electron acceptor for the enzyme in this species is believed to be ubiquinone. Couples the redox reaction to proton translocation (for every two electrons transferred, four hydrogen ions are translocated across the cytoplasmic membrane), and thus conserves the redox energy in a proton gradient. The sequence is that of NADH-quinone oxidoreductase subunit I from Pelobacter propionicus (strain DSM 2379 / NBRC 103807 / OttBd1).